The following is a 130-amino-acid chain: Glycine cleavage system H protein (130 aa).

The region spanning 22–103 (KAYIGISDCA…PYGSWIIAVE (82 aa)) is the Lipoyl-binding domain. N6-lipoyllysine is present on Lys63.

The protein belongs to the GcvH family. In terms of assembly, the glycine cleavage system is composed of four proteins: P, T, L and H. The cofactor is (R)-lipoate.

In terms of biological role, the glycine cleavage system catalyzes the degradation of glycine. The H protein shuttles the methylamine group of glycine from the P protein to the T protein. This Clostridium botulinum (strain Kyoto / Type A2) protein is Glycine cleavage system H protein.